Consider the following 52-residue polypeptide: Alpha-crystallin B chain (52 aa).

The protein belongs to the small heat shock protein (HSP20) family. In terms of assembly, homodimer. Aggregates with homologous proteins, including alpha-A-crystallin and the small heat shock protein HSPB1, to form large heteromeric complexes.

Functionally, may contribute to the transparency and refractive index of the lens. In Eudromia elegans (Elegant crested-tinamou), this protein is Alpha-crystallin B chain (CRYAB).